The following is a 433-amino-acid chain: Glutamate--tRNA ligase 1 (433 aa).

A 'HIGH' region motif is present at residues 7-17; the sequence is PSPTGLIHLGN. The short motif at 230–234 is the 'KMSKS' region element; that stretch reads KMSKR. Lysine 233 lines the ATP pocket.

Belongs to the class-I aminoacyl-tRNA synthetase family. Glutamate--tRNA ligase type 1 subfamily. Monomer.

The protein resides in the cytoplasm. The catalysed reaction is tRNA(Glu) + L-glutamate + ATP = L-glutamyl-tRNA(Glu) + AMP + diphosphate. Its function is as follows. Catalyzes the attachment of glutamate to tRNA(Glu) in a two-step reaction: glutamate is first activated by ATP to form Glu-AMP and then transferred to the acceptor end of tRNA(Glu). The sequence is that of Glutamate--tRNA ligase 1 from Neorickettsia sennetsu (strain ATCC VR-367 / Miyayama) (Ehrlichia sennetsu).